Consider the following 399-residue polypeptide: Probable peptidoglycan glycosyltransferase FtsW (399 aa).

9 helical membrane-spanning segments follow: residues 33 to 53 (LVWLTLGLFSVGLIMVISTSI), 71 to 91 (IFYFFLIFLLSFIFLRTPIIF), 98 to 118 (IILIISIVLLVLVLLIGHSIH), 160 to 180 (FWGFFKPMSVIITQSMLLLAE), 182 to 202 (DLGTVVVLFFTTISVLFLSGA), 204 to 224 (IGQFFIIITVSILTIILLILL), 287 to 307 (IIGEELGYIGSFLILLIIFTI), 324 to 344 (IFSGFLACSIGIWLSFQTSIN), and 359 to 379 (LPFISYGGSSLIINSIAIFFL).

It belongs to the SEDS family. FtsW subfamily.

It localises to the cell inner membrane. It carries out the reaction [GlcNAc-(1-&gt;4)-Mur2Ac(oyl-L-Ala-gamma-D-Glu-L-Lys-D-Ala-D-Ala)](n)-di-trans,octa-cis-undecaprenyl diphosphate + beta-D-GlcNAc-(1-&gt;4)-Mur2Ac(oyl-L-Ala-gamma-D-Glu-L-Lys-D-Ala-D-Ala)-di-trans,octa-cis-undecaprenyl diphosphate = [GlcNAc-(1-&gt;4)-Mur2Ac(oyl-L-Ala-gamma-D-Glu-L-Lys-D-Ala-D-Ala)](n+1)-di-trans,octa-cis-undecaprenyl diphosphate + di-trans,octa-cis-undecaprenyl diphosphate + H(+). It functions in the pathway cell wall biogenesis; peptidoglycan biosynthesis. Peptidoglycan polymerase that is essential for cell division. The chain is Probable peptidoglycan glycosyltransferase FtsW from Buchnera aphidicola subsp. Acyrthosiphon pisum (strain APS) (Acyrthosiphon pisum symbiotic bacterium).